A 98-amino-acid polypeptide reads, in one-letter code: NADH-ubiquinone oxidoreductase chain 4L (98 aa).

Transmembrane regions (helical) follow at residues 1 to 21 (MPLIYMNITLAFTMSLLGMLV), 29 to 49 (SLLCLEGMMLSLFIMITLMTL), and 58 to 78 (IMPITMLVFAACEAAVGLALL).

It belongs to the complex I subunit 4L family. In terms of assembly, core subunit of respiratory chain NADH dehydrogenase (Complex I) which is composed of 45 different subunits.

It localises to the mitochondrion inner membrane. The enzyme catalyses a ubiquinone + NADH + 5 H(+)(in) = a ubiquinol + NAD(+) + 4 H(+)(out). Its function is as follows. Core subunit of the mitochondrial membrane respiratory chain NADH dehydrogenase (Complex I) which catalyzes electron transfer from NADH through the respiratory chain, using ubiquinone as an electron acceptor. Part of the enzyme membrane arm which is embedded in the lipid bilayer and involved in proton translocation. This is NADH-ubiquinone oxidoreductase chain 4L (MT-ND4L) from Pongo abelii (Sumatran orangutan).